Here is a 475-residue protein sequence, read N- to C-terminus: ATP synthase subunit beta, chloroplastic (475 aa).

156 to 163 lines the ATP pocket; it reads GGAGVGKT.

It belongs to the ATPase alpha/beta chains family. As to quaternary structure, F-type ATPases have 2 components, CF(1) - the catalytic core - and CF(0) - the membrane proton channel. CF(1) has five subunits: alpha(3), beta(3), gamma(1), delta(1), epsilon(1). CF(0) has four main subunits: a(1), b(1), b'(1) and c(9-12).

Its subcellular location is the plastid. It is found in the chloroplast thylakoid membrane. It catalyses the reaction ATP + H2O + 4 H(+)(in) = ADP + phosphate + 5 H(+)(out). Produces ATP from ADP in the presence of a proton gradient across the membrane. The catalytic sites are hosted primarily by the beta subunits. This chain is ATP synthase subunit beta, chloroplastic, found in Gracilaria tenuistipitata var. liui (Red alga).